Consider the following 572-residue polypeptide: MVIILLGLCTLGFPRTAFCPSIMTNSTVSINTPPPYLTLACNEKLPTVMSIAGSDSSGGAGVEADIKTITAHRCYAMTCVTTLTAQTPVKVYGAQNIPKKMVSQILDANLQDMKCNVIKTGMLTVDAIEVLHEKLLQLGENRPKLVIDPVLCAASDSSPTGKDVVSLIIEKISPFADILTPNISDCFMLLGENREVSKLQDVLEIAKDLSRITNCSNILVKGGHIPCDDGKEKHITDVLYLGAEQKFITFKGQFVNTTRTHGAGCTLASAIASNLARGYSLSQSVYGGIEYVQNAIAIGCDVTKKAVKVGPINHVYAVEIPLEKMLTDECFTASDAVPKKPIEGSLDKIPGGSFFNYLINHPKVKPHWDAYVNHEFVKRVADGTLERKKFQFFIEQDYLYLIDYVRVCCVTGSKSPTLEDLEKDLVIADCARNELNEHERRLREEFGVKDPDYLQKIKRGPALRAYCRYLIDISRRGNWQEIVVALNPCLMGYVYAVDKVKDKITAAEGSIYSEWCDTCASSFCYQAVLEGERLMNHILETYPPDQLDSLVTIFARGCELETNFWTAAMEYE.

Residues 1–19 form the signal peptide; that stretch reads MVIILLGLCTLGFPRTAFC.

It belongs to the thiaminase-2 family.

Its subcellular location is the secreted. Is not required for thiamine biosynthesis. The sequence is that of Thiamine biosynthesis protein THI22 (THI22) from Saccharomyces cerevisiae (strain ATCC 204508 / S288c) (Baker's yeast).